The sequence spans 376 residues: Formate dehydrogenase 2 (376 aa).

Positions 97 and 121 each coordinate substrate. NAD(+)-binding positions include 176–177 (RI), Asp197, 244–248 (PLHKD), Thr270, Asp296, and 325–328 (HISG).

This sequence belongs to the D-isomer specific 2-hydroxyacid dehydrogenase family. FDH subfamily. In terms of assembly, homodimer.

It is found in the cytoplasm. It carries out the reaction formate + NAD(+) = CO2 + NADH. Catalyzes the NAD(+)-dependent oxidation of formate to carbon dioxide. Formate oxidation is the final step in the methanol oxidation pathway in methylotrophic microorganisms. Has a role in the detoxification of exogenous formate in non-methylotrophic organisms. The polypeptide is Formate dehydrogenase 2 (FDH2) (Saccharomyces cerevisiae (strain CEN.PK113-7D) (Baker's yeast)).